We begin with the raw amino-acid sequence, 222 residues long: MTLEFSTLGLAPDFVDYMKGWDTQRELHDKVVAAEAPSTVLLLEHAAVYTAGKLTEDHERPFDGTPVVAVDRGGKLTWHGPGQLIAYPILKLKNRSGIRDYVERLEAVMIAVMADYGINAERIKGRAGVWIKADSKGPDRKIAAIGIRVLDGVTMHGIAINCNNDLAPYAQIIACGITDAGVTTMSIEAGRTITPGDIAERVVEEFRKHEEALVSSPEGALL.

Positions Ala-34–Val-214 constitute a BPL/LPL catalytic domain. Residues Arg-72–His-79, Ala-144–Gly-146, and Gly-157–Ala-159 each bind substrate. Catalysis depends on Cys-175, which acts as the Acyl-thioester intermediate.

It belongs to the LipB family.

The protein localises to the cytoplasm. The enzyme catalyses octanoyl-[ACP] + L-lysyl-[protein] = N(6)-octanoyl-L-lysyl-[protein] + holo-[ACP] + H(+). Its pathway is protein modification; protein lipoylation via endogenous pathway; protein N(6)-(lipoyl)lysine from octanoyl-[acyl-carrier-protein]: step 1/2. In terms of biological role, catalyzes the transfer of endogenously produced octanoic acid from octanoyl-acyl-carrier-protein onto the lipoyl domains of lipoate-dependent enzymes. Lipoyl-ACP can also act as a substrate although octanoyl-ACP is likely to be the physiological substrate. In Arthrobacter sp. (strain FB24), this protein is Octanoyltransferase.